Here is a 255-residue protein sequence, read N- to C-terminus: Imidazole glycerol phosphate synthase subunit HisF (255 aa).

Catalysis depends on residues aspartate 12 and aspartate 131.

It belongs to the HisA/HisF family. As to quaternary structure, heterodimer of HisH and HisF.

It is found in the cytoplasm. It carries out the reaction 5-[(5-phospho-1-deoxy-D-ribulos-1-ylimino)methylamino]-1-(5-phospho-beta-D-ribosyl)imidazole-4-carboxamide + L-glutamine = D-erythro-1-(imidazol-4-yl)glycerol 3-phosphate + 5-amino-1-(5-phospho-beta-D-ribosyl)imidazole-4-carboxamide + L-glutamate + H(+). The protein operates within amino-acid biosynthesis; L-histidine biosynthesis; L-histidine from 5-phospho-alpha-D-ribose 1-diphosphate: step 5/9. Functionally, IGPS catalyzes the conversion of PRFAR and glutamine to IGP, AICAR and glutamate. The HisF subunit catalyzes the cyclization activity that produces IGP and AICAR from PRFAR using the ammonia provided by the HisH subunit. In Neisseria meningitidis serogroup C / serotype 2a (strain ATCC 700532 / DSM 15464 / FAM18), this protein is Imidazole glycerol phosphate synthase subunit HisF.